We begin with the raw amino-acid sequence, 541 residues long: Protopine 6-monooxygenase (541 aa).

Residues 9–29 (LLLNTWISAYSMAALLALVLV) traverse the membrane as a helical segment. C476 contacts heme.

This sequence belongs to the cytochrome P450 family. Heme is required as a cofactor.

The protein resides in the endoplasmic reticulum membrane. It catalyses the reaction protopine + reduced [NADPH--hemoprotein reductase] + O2 = 6-hydroxyprotopine + oxidized [NADPH--hemoprotein reductase] + H2O + H(+). Its pathway is alkaloid biosynthesis. Functionally, catalyzes the conversion of protopine and allocryptopine to dihydrosanguinarine and dihydrochelerythrine, respectively, in the biosynthesis of isoquinoline alkaloid sanguinarine. The chain is Protopine 6-monooxygenase (CYP82N3) from Papaver somniferum (Opium poppy).